The following is an 894-amino-acid chain: Alpha-actinin-2 (894 aa).

The tract at residues 1–254 is actin-binding; that stretch reads MNQIEPGVQY…IMTYVSCFYH (254 aa). Calponin-homology (CH) domains follow at residues 38–142 and 151–257; these read KQQR…LRFA and TSAK…HAFA. Residue Thr-237 is modified to Phosphothreonine. 4 Spectrin repeats span residues 281–391, 401–506, 516–627, and 637–740; these read RLME…WLLN, HLAE…ALER, QLHL…SLQE, and RLRR…EVET. EF-hand domains lie at 753–788 and 789–824; these read EQMNEFRASFNHFDRRKNGLMDHEDFRACLISMGYD and LGEAEFARIMTLVDPNGQGTVTFQSFIDFMTRETAD. Positions 766, 770, 777, 802, 804, and 808 each coordinate Ca(2+).

This sequence belongs to the alpha-actinin family. In terms of assembly, homodimer; antiparallel. Also forms heterodimers with ACTN3. Interacts with ADAM12, MYOZ1, MYOZ2 and MYOZ3. Interacts via its C-terminal region with the LDB3 PDZ domain. Interacts with XIRP2. Interacts with DST (via N-terminus). Interacts with PARVB. Interacts with SYNPO2. In terms of processing, ubiquitinated by FBXL22, leading to proteasomal degradation.

It localises to the cytoplasm. Its subcellular location is the myofibril. It is found in the sarcomere. The protein resides in the z line. F-actin cross-linking protein which is thought to anchor actin to a variety of intracellular structures. This is a bundling protein. The sequence is that of Alpha-actinin-2 (ACTN2) from Bos taurus (Bovine).